Here is a 573-residue protein sequence, read N- to C-terminus: Vacuolar protein 8 (573 aa).

Residues 1 to 36 form a disordered region; that stretch reads MAASAADRMGRQRMSGLSCSAPPRPTVVTNPGNKQD. The span at 27–36 shows a compositional bias: polar residues; sequence VVTNPGNKQD. ARM repeat units follow at residues 60 to 97, 98 to 137, 139 to 178, 180 to 219, 221 to 260, 264 to 303, 305 to 344, 346 to 386, and 430 to 469; these read NRGE…FAEI, TEKD…NLAV, NENK…NLAT, EANK…NMTH, DQNR…NIAV, NRKK…NLAS, SDYQ…NISI, PLNE…NLAA, and DELK…NLSS.

Belongs to the beta-catenin family.

The protein localises to the vacuole membrane. In terms of biological role, functions in both vacuole inheritance and protein targeting from the cytoplasm to vacuole. This chain is Vacuolar protein 8 (VAC8), found in Yarrowia lipolytica (strain CLIB 122 / E 150) (Yeast).